A 59-amino-acid chain; its full sequence is Conotoxin ViVB (59 aa).

A signal peptide spans 1–22; the sequence is MRCVPVFIILLLLIPSAPSAAV. The propeptide occupies 23–46; that stretch reads QPKTEKDDVPLASFHDSAMRILSR. Pyrrolidone carboxylic acid is present on Gln47. Val58 is modified (valine amide).

In terms of processing, contains 2 disulfide bonds that can be either 'C1-C3, C2-C4' or 'C1-C4, C2-C3', since these disulfide connectivities have been observed for conotoxins with cysteine framework V (for examples, see AC P0DQQ7 and AC P81755). As to expression, expressed by the venom duct.

It localises to the secreted. This is Conotoxin ViVB from Conus virgo (Virgin cone).